We begin with the raw amino-acid sequence, 65 residues long: Small ribosomal subunit protein eS27 (65 aa).

Residues Cys-20, Cys-23, Cys-39, and Cys-42 each coordinate Zn(2+). Residues 20-42 (CIDCGNEQIVFSHPATKVRCLVC) form a C4-type zinc finger.

Belongs to the eukaryotic ribosomal protein eS27 family. In terms of assembly, part of the 30S ribosomal subunit. Zn(2+) serves as cofactor.

The chain is Small ribosomal subunit protein eS27 from Thermococcus gammatolerans (strain DSM 15229 / JCM 11827 / EJ3).